A 118-amino-acid chain; its full sequence is NADPH-dependent 7-cyano-7-deazaguanine reductase (118 aa).

C31 serves as the catalytic Thioimide intermediate. D38 serves as the catalytic Proton donor. Residues 53 to 55 (VEL) and 72 to 73 (YE) each bind substrate.

Belongs to the GTP cyclohydrolase I family. QueF type 1 subfamily.

The protein resides in the cytoplasm. It carries out the reaction 7-aminomethyl-7-carbaguanine + 2 NADP(+) = 7-cyano-7-deazaguanine + 2 NADPH + 3 H(+). It functions in the pathway tRNA modification; tRNA-queuosine biosynthesis. Catalyzes the NADPH-dependent reduction of 7-cyano-7-deazaguanine (preQ0) to 7-aminomethyl-7-deazaguanine (preQ1). This Chlorobium phaeobacteroides (strain BS1) protein is NADPH-dependent 7-cyano-7-deazaguanine reductase.